The following is a 177-amino-acid chain: ATP synthase subunit delta (177 aa).

It belongs to the ATPase delta chain family. In terms of assembly, F-type ATPases have 2 components, F(1) - the catalytic core - and F(0) - the membrane proton channel. F(1) has five subunits: alpha(3), beta(3), gamma(1), delta(1), epsilon(1). F(0) has three main subunits: a(1), b(2) and c(10-14). The alpha and beta chains form an alternating ring which encloses part of the gamma chain. F(1) is attached to F(0) by a central stalk formed by the gamma and epsilon chains, while a peripheral stalk is formed by the delta and b chains.

The protein localises to the cell inner membrane. Its function is as follows. F(1)F(0) ATP synthase produces ATP from ADP in the presence of a proton or sodium gradient. F-type ATPases consist of two structural domains, F(1) containing the extramembraneous catalytic core and F(0) containing the membrane proton channel, linked together by a central stalk and a peripheral stalk. During catalysis, ATP synthesis in the catalytic domain of F(1) is coupled via a rotary mechanism of the central stalk subunits to proton translocation. Functionally, this protein is part of the stalk that links CF(0) to CF(1). It either transmits conformational changes from CF(0) to CF(1) or is implicated in proton conduction. The polypeptide is ATP synthase subunit delta (Flavobacterium johnsoniae (strain ATCC 17061 / DSM 2064 / JCM 8514 / BCRC 14874 / CCUG 350202 / NBRC 14942 / NCIMB 11054 / UW101) (Cytophaga johnsonae)).